A 186-amino-acid polypeptide reads, in one-letter code: Quinone reductase (186 aa).

FMN is bound by residues 13-20, 80-83, and S116; these read SLRKESYN and EYNR.

Belongs to the SsuE family. In terms of assembly, homotetramer. Dimer of dimers. The tetrameric configuration has a central role in chromate reductase activity. It depends on FMN as a cofactor.

The enzyme catalyses a quinone + NADH + H(+) = a quinol + NAD(+). It carries out the reaction a quinone + NADPH + H(+) = a quinol + NADP(+). It catalyses the reaction Cr(6+) + 2 NADH + O2 = Cr(3+) + superoxide + 2 NAD(+) + 2 H(+). The catalysed reaction is Cr(6+) + 2 NADPH + O2 = Cr(3+) + superoxide + 2 NADP(+) + 2 H(+). May be inhibited by divalent cations. Catalyzes the reduction of quinones. Acts by simultaneous two-electron transfer, avoiding formation of highly reactive semiquinone intermediates and producing quinols that promote tolerance of H(2)O(2). Quinone reduction is probably the primary biological role of ChrR. Can also reduce toxic chromate to insoluble and less toxic Cr(3+). Catalyzes the transfer of three electrons to Cr(6+) producing Cr(3+) and one electron to molecular oxygen. This reaction produces transiently a minimal amount of the toxic Cr(5+) species and reactive oxygen species (ROS). Chromate reduction protects the cell against chromate toxicity, but is likely a secondary activity. Can also reduce potassium ferricyanide and 2,6-dichloroindophenol. During chromate reduction, displays an eightfold preference for NADH over NADPH. The polypeptide is Quinone reductase (Pseudomonas putida (strain ATCC 47054 / DSM 6125 / CFBP 8728 / NCIMB 11950 / KT2440)).